Here is a 393-residue protein sequence, read N- to C-terminus: Staphopain B (393 aa).

Positions 1-36 (MNSSCKTRVFNIISIIMVSMLILSLGAFANNNKAKA) are cleaved as a signal peptide. Residues 37–219 (DSHSKQLEIN…KVEENEAIQE (183 aa)) constitute a propeptide that is removed on maturation. Catalysis depends on residues Cys-243, His-340, and Asn-360.

The protein belongs to the peptidase C47 family. In the cytoplasm, prematurely activated/folded SspB forms a stable non-covalent complex with SspC. Post-translationally, proteolytically cleaved by staphylococcal serine protease (SspA).

It is found in the secreted. Prematurely activated/folded staphopain B is inhibited by staphostatin B (SspC), which is probably required to protect staphylococcal cytoplasmic proteins from degradation by SspB. Its function is as follows. Cysteine protease that plays an important role in the inhibition of host innate immune response. Degrades host elastin, fibrogen, fibronectin and kininogen. Blocks phagocytosis of opsonised S.aureus by neutrophils and monocytes by inducing their death in a proteolytic activity-dependent manner. Decreases surface expression of the 'don't eat me' signal CD31 on neutrophils. Cleaves host galectin-3/LGALS3, thereby inhibiting the neutrophil-activating ability of the lectin. This is Staphopain B (sspB) from Staphylococcus aureus (strain MRSA252).